We begin with the raw amino-acid sequence, 376 residues long: Chaperone protein DnaJ (376 aa).

In terms of domain architecture, J spans 5–70; the sequence is DYYEVLGVGR…DKKAAYDQFG (66 aa). The CR-type zinc-finger motif lies at 132-210; it reads GLTKELRIPT…CHGEGRVEKS (79 aa). Positions 145, 148, 162, 165, 184, 187, 198, and 201 each coordinate Zn(2+). 4 CXXCXGXG motif repeats span residues 145–152, 162–169, 184–191, and 198–205; these read CDLCDGSG, CGTCHGQG, CPTCHGRG, and CGKCHGEG.

Belongs to the DnaJ family. As to quaternary structure, homodimer. Zn(2+) is required as a cofactor.

It localises to the cytoplasm. In terms of biological role, participates actively in the response to hyperosmotic and heat shock by preventing the aggregation of stress-denatured proteins and by disaggregating proteins, also in an autonomous, DnaK-independent fashion. Unfolded proteins bind initially to DnaJ; upon interaction with the DnaJ-bound protein, DnaK hydrolyzes its bound ATP, resulting in the formation of a stable complex. GrpE releases ADP from DnaK; ATP binding to DnaK triggers the release of the substrate protein, thus completing the reaction cycle. Several rounds of ATP-dependent interactions between DnaJ, DnaK and GrpE are required for fully efficient folding. Also involved, together with DnaK and GrpE, in the DNA replication of plasmids through activation of initiation proteins. In Shewanella loihica (strain ATCC BAA-1088 / PV-4), this protein is Chaperone protein DnaJ.